The primary structure comprises 318 residues: Ribose-phosphate pyrophosphokinase (318 aa).

ATP-binding positions include aspartate 46 to glutamate 48 and arginine 105 to glutamine 106. Mg(2+) contacts are provided by histidine 139 and aspartate 178. Lysine 201 is an active-site residue. Residues arginine 203, aspartate 227, and aspartate 231 to threonine 235 contribute to the D-ribose 5-phosphate site.

This sequence belongs to the ribose-phosphate pyrophosphokinase family. Class I subfamily. In terms of assembly, homohexamer. Mg(2+) serves as cofactor.

It localises to the cytoplasm. It catalyses the reaction D-ribose 5-phosphate + ATP = 5-phospho-alpha-D-ribose 1-diphosphate + AMP + H(+). It functions in the pathway metabolic intermediate biosynthesis; 5-phospho-alpha-D-ribose 1-diphosphate biosynthesis; 5-phospho-alpha-D-ribose 1-diphosphate from D-ribose 5-phosphate (route I): step 1/1. In terms of biological role, involved in the biosynthesis of the central metabolite phospho-alpha-D-ribosyl-1-pyrophosphate (PRPP) via the transfer of pyrophosphoryl group from ATP to 1-hydroxyl of ribose-5-phosphate (Rib-5-P). The chain is Ribose-phosphate pyrophosphokinase from Helicobacter pylori (strain J99 / ATCC 700824) (Campylobacter pylori J99).